The primary structure comprises 347 residues: Protein RecA (347 aa).

Residue 67-74 (GPESSGKT) coordinates ATP.

This sequence belongs to the RecA family.

The protein resides in the cytoplasm. Its function is as follows. Can catalyze the hydrolysis of ATP in the presence of single-stranded DNA, the ATP-dependent uptake of single-stranded DNA by duplex DNA, and the ATP-dependent hybridization of homologous single-stranded DNAs. It interacts with LexA causing its activation and leading to its autocatalytic cleavage. The polypeptide is Protein RecA (Helicobacter pylori (strain P12)).